We begin with the raw amino-acid sequence, 287 residues long: GTPase Era (287 aa).

The Era-type G domain occupies 11–174; it reads RSGFVAVIGR…RSYLASSLPE (164 aa). GTP-binding positions include 19 to 26 and 66 to 70; these read GRTNVGKS and DTPGI. The KH type-2 domain occupies 205–273; it reads LRDELPQALA…PLTLRVKVQR (69 aa).

It belongs to the TRAFAC class TrmE-Era-EngA-EngB-Septin-like GTPase superfamily. Era GTPase family. Monomer.

Its subcellular location is the cytoplasm. It localises to the cell membrane. Its function is as follows. An essential GTPase that binds both GDP and GTP, with rapid nucleotide exchange. Plays a role in 16S rRNA processing and 30S ribosomal subunit biogenesis and possibly also in cell cycle regulation and energy metabolism. This Acidimicrobium ferrooxidans (strain DSM 10331 / JCM 15462 / NBRC 103882 / ICP) protein is GTPase Era.